The following is a 1031-amino-acid chain: Beta-galactosidase (1031 aa).

Residues Asn100 and Asp198 each contribute to the substrate site. A Na(+)-binding site is contributed by Asp198. 3 residues coordinate Mg(2+): Glu412, His414, and Glu457. Substrate is bound by residues Glu457 and 533 to 536 (EYAH). Catalysis depends on Glu457, which acts as the Proton donor. Glu533 (nucleophile) is an active-site residue. Residue Asn593 coordinates Mg(2+). 2 residues coordinate Na(+): Phe597 and Asn600. Substrate contacts are provided by Asn600 and Trp1005.

It belongs to the glycosyl hydrolase 2 family. As to quaternary structure, homotetramer. The cofactor is Mg(2+). It depends on Na(+) as a cofactor.

It catalyses the reaction Hydrolysis of terminal non-reducing beta-D-galactose residues in beta-D-galactosides.. The protein is Beta-galactosidase of Vibrio vulnificus (strain YJ016).